The chain runs to 183 residues: ATP-dependent protease subunit HslV (183 aa).

Threonine 10 is a catalytic residue. Na(+) is bound by residues alanine 164, cysteine 167, and threonine 170.

Belongs to the peptidase T1B family. HslV subfamily. As to quaternary structure, a double ring-shaped homohexamer of HslV is capped on each side by a ring-shaped HslU homohexamer. The assembly of the HslU/HslV complex is dependent on binding of ATP.

It localises to the cytoplasm. The enzyme catalyses ATP-dependent cleavage of peptide bonds with broad specificity.. Allosterically activated by HslU binding. Its function is as follows. Protease subunit of a proteasome-like degradation complex believed to be a general protein degrading machinery. This chain is ATP-dependent protease subunit HslV, found in Rhizorhabdus wittichii (strain DSM 6014 / CCUG 31198 / JCM 15750 / NBRC 105917 / EY 4224 / RW1) (Sphingomonas wittichii).